The chain runs to 183 residues: Adenine phosphoribosyltransferase (183 aa).

The protein belongs to the purine/pyrimidine phosphoribosyltransferase family. Homodimer.

It is found in the cytoplasm. It catalyses the reaction AMP + diphosphate = 5-phospho-alpha-D-ribose 1-diphosphate + adenine. The protein operates within purine metabolism; AMP biosynthesis via salvage pathway; AMP from adenine: step 1/1. In terms of biological role, catalyzes a salvage reaction resulting in the formation of AMP, that is energically less costly than de novo synthesis. The chain is Adenine phosphoribosyltransferase from Salmonella heidelberg (strain SL476).